The following is an 87-amino-acid chain: UPF0335 protein RL4065 (87 aa).

It belongs to the UPF0335 family.

In Rhizobium johnstonii (strain DSM 114642 / LMG 32736 / 3841) (Rhizobium leguminosarum bv. viciae), this protein is UPF0335 protein RL4065.